A 621-amino-acid chain; its full sequence is 2-hydroxyacyl-CoA lyase 2 (621 aa).

The helical transmembrane segment at 7–29 (LGCSLGAALGGVIFASYKLGLLY) threads the bilayer. Glu87 contributes to the thiamine diphosphate binding site. A thiamine pyrophosphate binding region spans residues 459–539 (DFVGSAAYIM…VIALVGNDAC (81 aa)). 2 residues coordinate Mg(2+): Asp510 and Asn536.

The protein belongs to the TPP enzyme family. Requires Mg(2+) as cofactor. Thiamine diphosphate is required as a cofactor.

It localises to the endoplasmic reticulum membrane. The enzyme catalyses 2-hydroxyoctadecanoyl-CoA = heptadecanal + formyl-CoA. It catalyses the reaction (2R)-hydroxyhexadecanoyl-CoA = pentadecanal + formyl-CoA. Its function is as follows. Endoplasmic reticulum 2-OH acyl-CoA lyase involved in the cleavage (C1 removal) reaction in the fatty acid alpha-oxydation in a thiamine pyrophosphate (TPP)-dependent manner. This is 2-hydroxyacyl-CoA lyase 2 (ilvbl) from Danio rerio (Zebrafish).